Consider the following 939-residue polypeptide: MKDKIIVKGAKVHNLKNVSLEIPRDKLIVFTGLSGSGKSSLAFDTIYAEGQRRYVESLSSYARQFLGQMDKPDVESIEGLSPAISIDQKTTSRNPRSTVGTVTEIYDYLRLLYARVGVPHCPKCGKEITQQSVDQIVDQIMELPERSKIMILAPIIRGRKGTHEKVLENIKKQGFVRARIDGEIYDLTEDEIKLEKNIKHNIEAVVDRIIVKDGIEGRLTDSIETSLKMAEGLVLVNIIGEEDRLYSEHFACADCGISIDELAPRMFSFNSPFGKCERCDGLGTLMEIDEDLVVPNKDLSIRGGAISTWGDSRMKEESWTYCVLKALMEKYNFDLDTPYKDLPKKVQEVLMYGEPEKLKVTYTKENVTAVYNHSFEGEINNLRRRYMETNSDTMKAEIEKYMSDNPCPKCKGARLKPEALAVTVGGKNIFEFTSMAIREELDFINSINFSEKDKIISSQIIKEIQSRLSFLINVGLDYLDLARKAGTLSGGEAQRIRLATQIGSQLMGVLYILDEPSIGLHQRDNDRLISTLKQLRDVGNTLIVVEHDEDTMREADYIVDIGPGAGEHGGKIVASGTLDEIMSNENSLTGKYLTGAKKVELPEERRKGNGNFITVKGAKENNLKNVTAKFPLGTLTMVTGVSGSGKSTLVNEILYKGLNKIVNKAKDLPGKFKEITGYENIDKIIDIDQSPIGRTPRSNPATYTGTFDIIRELFSQTQEAKMRGYKPGRFSFNVKGGRCEACSGDGIIKIEMQFLSDVYVPCEVCKGKRYNRETLEVKYKGKNIADVLNMTVEEALEFFENIPRIKNKLQTLMDVGLGYIRLGQPSTQLSGGEAQRIKLAYELSKRSTGKTLYILDEPTTGLHIHDVNRLVKILQRLVDGGNTVIVIEHNLDMIKCADYIVDLGPEGGDKGGTIIATGTPEKIAGAKESYTGKYLKKYL.

ATP is bound at residue 32–39 (GLSGSGKS). A C4-type zinc finger spans residues 252–279 (CADCGISIDELAPRMFSFNSPFGKCERC). 2 consecutive ABC transporter domains span residues 309–588 (WGDS…ENSL) and 608–936 (GNGN…KYLK). 640-647 (GVSGSGKS) is an ATP binding site. The segment at 739 to 765 (CEACSGDGIIKIEMQFLSDVYVPCEVC) adopts a C4-type zinc-finger fold.

Belongs to the ABC transporter superfamily. UvrA family. Forms a heterotetramer with UvrB during the search for lesions.

It localises to the cytoplasm. In terms of biological role, the UvrABC repair system catalyzes the recognition and processing of DNA lesions. UvrA is an ATPase and a DNA-binding protein. A damage recognition complex composed of 2 UvrA and 2 UvrB subunits scans DNA for abnormalities. When the presence of a lesion has been verified by UvrB, the UvrA molecules dissociate. This chain is UvrABC system protein A, found in Clostridium perfringens (strain 13 / Type A).